Here is a 160-residue protein sequence, read N- to C-terminus: MNTPLPPGLAQIWVDADACPAVIRDILFRAAQRTGIPVTLVANHFLRTPTLAHVRALQVPGGPDAADDAIAERVNAGDLVVTQDIPLAARVLERGAAAVSPRGEPFSSDSIAERLSVRGFLEELRGAGVATGGPPALHARDRQAFAAQLDRWLARQSARS.

It belongs to the UPF0178 family.

The sequence is that of UPF0178 protein XC_1827 from Xanthomonas campestris pv. campestris (strain 8004).